The sequence spans 134 residues: Small ribosomal subunit protein uS11 (134 aa).

Belongs to the universal ribosomal protein uS11 family. Part of the 30S ribosomal subunit. Interacts with proteins S7 and S18. Binds to IF-3.

Functionally, located on the platform of the 30S subunit, it bridges several disparate RNA helices of the 16S rRNA. Forms part of the Shine-Dalgarno cleft in the 70S ribosome. This is Small ribosomal subunit protein uS11 from Leptothrix cholodnii (strain ATCC 51168 / LMG 8142 / SP-6) (Leptothrix discophora (strain SP-6)).